We begin with the raw amino-acid sequence, 397 residues long: Mediator of RNA polymerase II transcription subunit 3 (397 aa).

Met1 bears the N-acetylmethionine mark. Residues 147–165 are compositionally biased toward low complexity; the sequence is ASTPTTTATPHANPITHAH. Disordered stretches follow at residues 147–227, 288–327, and 346–370; these read ASTP…AQAQ, SMGAQNQGGQVSMSQFNGSGNGSNPNTNTNSNNTPLQSQL, and FQQQQQQQQQQQQPQPQYNMNMGMN. Composition is skewed to polar residues over residues 166-178 and 189-202; these read SLSNPNSTATMQH and SGSTMGTPTVHNST. The segment covering 211–223 has biased composition (basic residues); it reads KKPRKPRQTKKAK. Positions 290-303 are enriched in polar residues; that stretch reads GAQNQGGQVSMSQF. Residues 309–322 show a composition bias toward low complexity; sequence GSNPNTNTNSNNTP.

It belongs to the mediator complex subunit 3 family. As to quaternary structure, component of the Mediator complex, which is composed of at least 21 subunits that form three structurally distinct submodules. The Mediator head module contains MED6, MED8, MED11, SRB4/MED17, SRB5/MED18, ROX3/MED19, SRB2/MED20 and SRB6/MED22, the middle module contains MED1, MED4, NUT1/MED5, MED7, CSE2/MED9, NUT2/MED10, SRB7/MED21 and SOH1/MED31, and the tail module contains MED2, PGD1/MED3, RGR1/MED14, GAL11/MED15 and SIN4/MED16. The head and the middle modules interact directly with RNA polymerase II, whereas the elongated tail module interacts with gene-specific regulatory proteins. PGD1/MED3 interacts directly with the CYC8-TUP1 corepressor proteins.

It localises to the nucleus. Component of the Mediator complex, a coactivator involved in the regulated transcription of nearly all RNA polymerase II-dependent genes. Mediator functions as a bridge to convey information from gene-specific regulatory proteins to the basal RNA polymerase II transcription machinery. The Mediator complex, having a compact conformation in its free form, is recruited to promoters by direct interactions with regulatory proteins and serves for the assembly of a functional preinitiation complex with RNA polymerase II and the general transcription factors. The Mediator complex unfolds to an extended conformation and partially surrounds RNA polymerase II, specifically interacting with the unphosphorylated form of the C-terminal domain (CTD) of RNA polymerase II. The Mediator complex dissociates from the RNA polymerase II holoenzyme and stays at the promoter when transcriptional elongation begins. PGD1/MED3 is also involved in direct repeat recombination. The protein is Mediator of RNA polymerase II transcription subunit 3 (PGD1) of Saccharomyces cerevisiae (strain ATCC 204508 / S288c) (Baker's yeast).